Reading from the N-terminus, the 195-residue chain is Peptidyl-tRNA hydrolase (195 aa).

Residue Tyr18 participates in tRNA binding. His23 serves as the catalytic Proton acceptor. TRNA-binding residues include Tyr69, Asn71, and Asn117.

It belongs to the PTH family. In terms of assembly, monomer.

It localises to the cytoplasm. It carries out the reaction an N-acyl-L-alpha-aminoacyl-tRNA + H2O = an N-acyl-L-amino acid + a tRNA + H(+). In terms of biological role, hydrolyzes ribosome-free peptidyl-tRNAs (with 1 or more amino acids incorporated), which drop off the ribosome during protein synthesis, or as a result of ribosome stalling. Functionally, catalyzes the release of premature peptidyl moieties from peptidyl-tRNA molecules trapped in stalled 50S ribosomal subunits, and thus maintains levels of free tRNAs and 50S ribosomes. In Nitrosomonas europaea (strain ATCC 19718 / CIP 103999 / KCTC 2705 / NBRC 14298), this protein is Peptidyl-tRNA hydrolase.